The following is a 309-amino-acid chain: Methionyl-tRNA formyltransferase (309 aa).

109–112 (SLLP) serves as a coordination point for (6S)-5,6,7,8-tetrahydrofolate.

Belongs to the Fmt family.

It carries out the reaction L-methionyl-tRNA(fMet) + (6R)-10-formyltetrahydrofolate = N-formyl-L-methionyl-tRNA(fMet) + (6S)-5,6,7,8-tetrahydrofolate + H(+). Its function is as follows. Attaches a formyl group to the free amino group of methionyl-tRNA(fMet). The formyl group appears to play a dual role in the initiator identity of N-formylmethionyl-tRNA by promoting its recognition by IF2 and preventing the misappropriation of this tRNA by the elongation apparatus. The protein is Methionyl-tRNA formyltransferase of Clostridium perfringens (strain 13 / Type A).